The following is a 364-amino-acid chain: DNA replication and repair protein RecF (364 aa).

ATP is bound at residue 30–37 (GDNAQGKT).

This sequence belongs to the RecF family.

It localises to the cytoplasm. Its function is as follows. The RecF protein is involved in DNA metabolism; it is required for DNA replication and normal SOS inducibility. RecF binds preferentially to single-stranded, linear DNA. It also seems to bind ATP. This chain is DNA replication and repair protein RecF, found in Clostridium kluyveri (strain ATCC 8527 / DSM 555 / NBRC 12016 / NCIMB 10680 / K1).